A 336-amino-acid polypeptide reads, in one-letter code: MPRRPSTGTQSDTPALHVVPSFYGVYLLQSEPKPSSFYIGSTPDPPRRLRQHNGDLKAGGAYRTKRAGFRPWRMLLVVYDFPSKVSALQFEHSFQHCHETRHIKQEERISKNKLSGRTLHHKVANVALLLRSSYFRHLPLKVLVFEEAVYNSFMNNKFVTCSHVDLLNTNFNEYFSVMEKDLDSTVDSWKTRHTNENEIWSMAKEAVILGSPRCALCLEPIEQVPETSSPISKRSDLQRYLQSESLPLVTMCYNPQCRDVFHLSCLGHRFTNSDGFQSLIPATVNRCCSCNAKLEWRTLAKIATKLRYYVLKDSLQLPSQVLENDDNYESQNVNDS.

One can recognise a GIY-YIG domain in the interval 21–104 (SFYGVYLLQS…QHCHETRHIK (84 aa)). Positions 37-57 (FYIGSTPDPPRRLRQHNGDLK) are disordered. The segment at 214–290 (CALCLEPIEQ…PATVNRCCSC (77 aa)) adopts an SLX1-type zinc-finger fold.

Belongs to the SLX1 family. Forms a heterodimer with SLX4. Requires a divalent metal cation as cofactor.

The protein resides in the nucleus. In terms of biological role, catalytic subunit of the SLX1-SLX4 structure-specific endonuclease that resolves DNA secondary structures generated during DNA repair and recombination. Has endonuclease activity towards branched DNA substrates, introducing single-strand cuts in duplex DNA close to junctions with ss-DNA. The polypeptide is Structure-specific endonuclease subunit SLX1 (Scheffersomyces stipitis (strain ATCC 58785 / CBS 6054 / NBRC 10063 / NRRL Y-11545) (Yeast)).